Consider the following 222-residue polypeptide: Small ribosomal subunit protein eS1 (222 aa).

This sequence belongs to the eukaryotic ribosomal protein eS1 family.

In Pyrobaculum neutrophilum (strain DSM 2338 / JCM 9278 / NBRC 100436 / V24Sta) (Thermoproteus neutrophilus), this protein is Small ribosomal subunit protein eS1.